The chain runs to 503 residues: Transcription termination/antitermination protein NusA (503 aa).

Residues Gly140–Thr206 enclose the S1 motif domain. The KH domain occupies Ser308–Glu374.

It belongs to the NusA family. As to quaternary structure, monomer. Binds directly to the core enzyme of the DNA-dependent RNA polymerase and to nascent RNA.

The protein localises to the cytoplasm. Its function is as follows. Participates in both transcription termination and antitermination. This is Transcription termination/antitermination protein NusA from Coxiella burnetii (strain RSA 493 / Nine Mile phase I).